Consider the following 852-residue polypeptide: MDYLIIIRITAVAVVLYLTRYVCCLYLHLQDVPGPLFAKFTNLQRVWWVKSGRAHEYHRRMHAVYGPAVRFGPNMVSISDPRTIPAIYPSRPGFPKSDFYRTQKPYTPNKGAMPAVFNSQDEDLHKRLRSPIAPLYSMTNVVKLESFVDQTLAVLLEQLDGRFLGSNDVPFDLGSWLQYFAFDSMGTLTFSRRYGFLEQGRDMNGILGEIWKFMKRVSVMGQIPWFDEFCNTNPFIALFRSPTGFGVLKVVDKFILQRLAPREKDEVSDEKDMLSQFLNIQASNPDVMPWAPRAWTFSNIMAGSDSTANVMRTIMYNLLVHRDTLSRLQDELLESESSNGLSRTCPSWEKVRDLPYLDACVLEALRLHPPFCLPFERVVPGGGLTVCETYLPAGTIVGISPYMANRDKETFGNDADEWRPERWLGLSHEDRKRLENSLLTFGAGRRTCLGKNIAILEIKKLIPVLLLNYDIQIVNPENYKTENAWFFKQTGLQAVIRKRAKMERGSSNKDKPTLPPVLNIPPSSSTVDVRVIDPGTLLDLRPDLFWQPELPGLRKVTAPTYCFLISVGTRHVLFDLGVRQDWERLPPSVVAMIKSQTTIQNPRNISDILDSDASSLGIRSTDIEAIIWSHAHFDHIGDPSTFPLSTELVVGPGIRDSHWPGFPTNPDAINLNSDIQGRKVREISFERTEKEAIKIGSFDALDYFGDGSFYLLNAAGHSIGHIGALARVTTSPDSFVFMGGDSCHHAGVLRPSKYLPCPSHSRHIPLSSESESVFTLSPVLPSDYDAALKTVDNIKELDAYDNVFLILAHDSTLKGNMDFYPLTINDWKAKGYGKQTKWLFYKDLEDAMEGTK.

Over 1–6 (MDYLII) the chain is Lumenal. The helical transmembrane segment at 7-29 (IRITAVAVVLYLTRYVCCLYLHL) threads the bilayer. Residues 30–852 (QDVPGPLFAK…DLEDAMEGTK (823 aa)) are Cytoplasmic-facing. Cys448 is a binding site for heme.

It belongs to the cytochrome P450 family. The cofactor is heme.

The protein localises to the endoplasmic reticulum membrane. The catalysed reaction is 5-methylorsellinate + reduced [NADPH--hemoprotein reductase] + O2 = 4,6-dihydroxy-2-(hydroxymethyl)-3-methylbenzoate + oxidized [NADPH--hemoprotein reductase] + H2O + H(+). It carries out the reaction 4,6-dihydroxy-2-(hydroxymethyl)-3-methylbenzoate + H(+) = 5,7-dihydroxy-4-methylphthalide + H2O. It functions in the pathway secondary metabolite biosynthesis; terpenoid biosynthesis. In terms of biological role, cytochrome P450 monooxygenase; part of the gene cluster that mediates the biosynthesis of mycophenolic acid (MPA), the first isolated antibiotic natural product in the world obtained from a culture of Penicillium brevicompactum in 1893. MpaDE is an endoplasmic reticulum-bound enzyme that catalyzes the conversion of 5-methylorsellinic acid (5MOA) into the phthalide compound 5,7-dihydroxy-4,6-dimethylphthalide (DHMP). MpaDE first catalyzes hydroxylation of 5-MOA to 4,6-dihydroxy-2-(hydroxymethyl)-3-methylbenzoic acid (DHMB), and then acts as a lactone synthase that catalyzes the ring closure to convert DHMB into DHMP. The first step of the pathway is the synthesis of 5-methylorsellinic acid (5MOA) by the cytosolic polyketide synthase mpaC. 5MOA is then converted to the phthalide compound 5,7-dihydroxy-4,6-dimethylphthalide (DHMP) by the endoplasmic reticulum-bound cytochrome P450 monooxygenase mpaDE. MpaDE first catalyzes hydroxylation of 5-MOA to 4,6-dihydroxy-2-(hydroxymethyl)-3-methylbenzoic acid (DHMB). MpaDE then acts as a lactone synthase that catalyzes the ring closure to convert DHMB into DHMP. The next step is the prenylation of DHMP by the Golgi apparatus-associated prenyltransferase mpaA to yield farnesyl-DHMP (FDHMP). The ER-bound oxygenase mpaB then mediates the oxidative cleavage the C19-C20 double bond in FDHMP to yield FDHMP-3C via a mycophenolic aldehyde intermediate. The O-methyltransferase mpaG catalyzes the methylation of FDHMP-3C to yield MFDHMP-3C. After the cytosolic methylation of FDHMP-3C, MFDHMP-3C enters into peroxisomes probably via free diffusion due to its low molecular weight. Upon a peroxisomal CoA ligation reaction, catalyzed by a beta-oxidation component enzyme acyl-CoA ligase ACL891, MFDHMP-3C-CoA would then be restricted to peroxisomes for the following beta-oxidation pathway steps. The peroxisomal beta-oxidation machinery than converts MFDHMP-3C-CoA into MPA_CoA, via a beta-oxidation chain-shortening process. Finally mpaH acts as a peroxisomal acyl-CoA hydrolase with high substrate specificity toward MPA-CoA to release the final product MPA. In Penicillium roqueforti (strain FM164), this protein is Cytochrome P450 monooxygenase mpaDE.